The sequence spans 312 residues: tRNA-dihydrouridine(16) synthase (312 aa).

Residues 7–9 (PME) and Q68 contribute to the FMN site. C98 serves as the catalytic Proton donor. FMN-binding positions include K139, 200-202 (NGE), and 224-225 (GR).

The protein belongs to the Dus family. DusC subfamily. FMN is required as a cofactor.

The enzyme catalyses 5,6-dihydrouridine(16) in tRNA + NADP(+) = uridine(16) in tRNA + NADPH + H(+). It catalyses the reaction 5,6-dihydrouridine(16) in tRNA + NAD(+) = uridine(16) in tRNA + NADH + H(+). In terms of biological role, catalyzes the synthesis of 5,6-dihydrouridine (D), a modified base found in the D-loop of most tRNAs, via the reduction of the C5-C6 double bond in target uridines. Specifically modifies U16 in tRNAs. The protein is tRNA-dihydrouridine(16) synthase of Salmonella typhimurium (strain LT2 / SGSC1412 / ATCC 700720).